The sequence spans 125 residues: Small ribosomal subunit protein uS12m (125 aa).

This sequence belongs to the universal ribosomal protein uS12 family.

Its subcellular location is the mitochondrion. In terms of biological role, protein S12 is involved in the translation initiation step. The protein is Small ribosomal subunit protein uS12m (RPS12) of Allium cepa (Onion).